A 190-amino-acid chain; its full sequence is Xanthine phosphoribosyltransferase (190 aa).

Residues Leu20 and Asn27 each coordinate xanthine. Position 128–132 (128–132 (ANGKA)) interacts with 5-phospho-alpha-D-ribose 1-diphosphate. Lys156 contacts xanthine.

This sequence belongs to the purine/pyrimidine phosphoribosyltransferase family. Xpt subfamily. Homodimer.

The protein resides in the cytoplasm. The catalysed reaction is XMP + diphosphate = xanthine + 5-phospho-alpha-D-ribose 1-diphosphate. It participates in purine metabolism; XMP biosynthesis via salvage pathway; XMP from xanthine: step 1/1. Converts the preformed base xanthine, a product of nucleic acid breakdown, to xanthosine 5'-monophosphate (XMP), so it can be reused for RNA or DNA synthesis. In Pseudomonas fluorescens (strain Pf0-1), this protein is Xanthine phosphoribosyltransferase.